We begin with the raw amino-acid sequence, 294 residues long: Non-selective voltage-gated ion channel VDAC2 (294 aa).

An N-acetylalanine modification is found at Ala-2. ATP is bound by residues Lys-23 and Lys-31. Position 31 is an N6-acetyllysine; alternate (Lys-31). Residue Lys-31 is modified to N6-succinyllysine; alternate. Lys-31 is covalently cross-linked (Glycyl lysine isopeptide (Lys-Gly) (interchain with G-Cter in ubiquitin); alternate). 2 beta stranded membrane passes run Leu-37–Ser-46 and Val-50–Ser-58. Glycyl lysine isopeptide (Lys-Gly) (interchain with G-Cter in ubiquitin) cross-links involve residues Lys-64 and Lys-72. Residues Val-65–Trp-75 traverse the membrane as a beta stranded segment. Tyr-78 bears the Phosphotyrosine mark. The next 3 beta stranded transmembrane spans lie at Leu-80–Asn-87, Thr-91–Asp-100, and Leu-106–Ser-115. Phosphothreonine is present on Thr-118. Position 120 is an N6-acetyllysine; alternate (Lys-120). A Glycyl lysine isopeptide (Lys-Gly) (interchain with G-Cter in ubiquitin); alternate cross-link involves residue Lys-120. Residues Lys-121 and Lys-124 each participate in a glycyl lysine isopeptide (Lys-Gly) (interchain with G-Cter in ubiquitin) cross-link. The next 4 beta stranded transmembrane spans lie at Ser-122–Arg-131, Ile-134–Asp-141, Ala-148–Gly-156, and Leu-161–Asp-169. Residue Lys-172 forms a Glycyl lysine isopeptide (Lys-Gly) (interchain with G-Cter in ubiquitin) linkage. 6 beta stranded membrane passes run Lys-174–Thr-186, Phe-189–Asn-196, Glu-200–Val-209, Leu-213–Thr-222, Arg-229–Leu-238, and Ala-242–Asn-249. Ser-251 is modified (phosphoserine). Residues Leu-253 to Gly-255 and Ser-271 to Asp-275 each bind NAD(+). 2 consecutive transmembrane segments (beta stranded) span residues Leu-253–Leu-262 and Gly-265–Val-274. Residue Lys-277 is modified to N6-acetyllysine; alternate. Lys-277 is covalently cross-linked (Glycyl lysine isopeptide (Lys-Gly) (interchain with G-Cter in ubiquitin); alternate). Residues His-284–Glu-293 form a beta stranded membrane-spanning segment. Lys-285 participates in a covalent cross-link: Glycyl lysine isopeptide (Lys-Gly) (interchain with G-Cter in ubiquitin).

This sequence belongs to the eukaryotic mitochondrial porin family. Monomer, homodimer and higher order oligomers; formation of higher order structures is necessary for scramblase activity. Interacts with ARMC12 in a TBC1D21-dependent manner. Interacts with KLC3. Interacts with SPATA33. Interacts with PPP3CC in a SPATA33-dependent manner. Ubiquitinated by PRKN during mitophagy, leading to its degradation and enhancement of mitophagy. Deubiquitinated by USP30. Expressed in erythrocytes (at protein level). Expressed in all tissues examined.

It localises to the mitochondrion outer membrane. It is found in the membrane. The catalysed reaction is chloride(in) = chloride(out). It carries out the reaction K(+)(in) = K(+)(out). It catalyses the reaction a 1,2-diacyl-sn-glycero-3-phospho-L-serine(in) = a 1,2-diacyl-sn-glycero-3-phospho-L-serine(out). The enzyme catalyses a 1,2-diacyl-sn-glycero-3-phosphocholine(in) = a 1,2-diacyl-sn-glycero-3-phosphocholine(out). The catalysed reaction is a 1,2-diacyl-sn-glycero-3-phospho-(1D-myo-inositol)(in) = a 1,2-diacyl-sn-glycero-3-phospho-(1D-myo-inositol)(out). Non-selective voltage-gated ion channel that mediates the transport of anions and cations through the mitochondrion outer membrane and plasma membrane. The channel adopts an open conformation at zero mV and a closed conformation at both positive and negative potentials. There are two populations of channels; the main that functions in a lower open-state conductance with lower ion selectivity, that switch, in a voltage-dependent manner, from the open to a low-conducting 'closed' state and the other that has a normal ion selectivity in the typical high conductance, 'open' state. Binds various lipids, including the sphingolipid ceramide, the phospholipid phosphatidylcholine, and the sterols cholesterol and oxysterol. Binding of ceramide promotes the mitochondrial outer membrane permeabilization (MOMP) apoptotic pathway. Its function is as follows. Catalyzes the scrambling of phospholipids across the outer mitochondrial membrane; the mechanism is unrelated to channel activity and is capable of translocating both anionic and zwitterionic phospholipids. This chain is Non-selective voltage-gated ion channel VDAC2, found in Homo sapiens (Human).